A 198-amino-acid chain; its full sequence is Twist-related protein 1 (198 aa).

Over residues 1–18 the composition is skewed to low complexity; that stretch reads MMQDVSSSPVSPADDSLS. The segment at 1–101 is disordered; it reads MMQDVSSSPV…GGGSPQSYEE (101 aa). A compositionally biased stretch (basic residues) spans 34–43; sequence RGGRKRRSSR. Composition is skewed to gly residues over residues 46–64 and 79–95; these read AGGGAGPGGAAGGVGGGDE and GCGGGAGGGGSSSGGGS. Residues 104–155 enclose the bHLH domain; the sequence is TQRVMANVRERQRTQSLNEAFAALRKIIPTLPSDKLSKIQTLKLAARYIDFL. A sufficient for transactivation activity region spans residues 157-187; sequence QVLQSDELDSKMASCSYVAHERLSYAFSVWR.

In terms of assembly, efficient DNA binding requires dimerization with another bHLH protein. Homodimer or heterodimer with E proteins such as TCF3. ID1 binds preferentially to TCF3 but does not interact efficiently with TWIST1 so ID1 levels control the amount of TCF3 available to dimerize with TWIST and thus determine the type of dimer formed.

The protein resides in the nucleus. Acts as a transcriptional regulator. Inhibits myogenesis by sequestrating E proteins, inhibiting trans-activation by MEF2, and inhibiting DNA-binding by MYOD1 through physical interaction. This interaction probably involves the basic domains of both proteins. Also represses expression of pro-inflammatory cytokines such as TNFA and IL1B. Regulates cranial suture patterning and fusion. Activates transcription as a heterodimer with E proteins. Regulates gene expression differentially, depending on dimer composition. Homodimers induce expression of FGFR2 and POSTN while heterodimers repress FGFR2 and POSTN expression and induce THBS1 expression. Heterodimerization is also required for osteoblast differentiation. Represses the activity of the circadian transcriptional activator: NPAS2-BMAL1 heterodimer. In Eulemur fulvus fulvus (Brown lemur), this protein is Twist-related protein 1 (TWIST1).